Here is a 276-residue protein sequence, read N- to C-terminus: Large ribosomal subunit protein uL2 (276 aa).

A disordered region spans residues 219 to 276; that stretch reads TVRGSVMNPNDHPHGGGEGKQPIGRKQQMTPWGKKARGIKTRDKKKASTSMIVRRRNG. The segment covering 252–276 has biased composition (basic residues); sequence KKARGIKTRDKKKASTSMIVRRRNG.

Belongs to the universal ribosomal protein uL2 family. As to quaternary structure, part of the 50S ribosomal subunit. Forms a bridge to the 30S subunit in the 70S ribosome.

Functionally, one of the primary rRNA binding proteins. Required for association of the 30S and 50S subunits to form the 70S ribosome, for tRNA binding and peptide bond formation. It has been suggested to have peptidyltransferase activity; this is somewhat controversial. Makes several contacts with the 16S rRNA in the 70S ribosome. The protein is Large ribosomal subunit protein uL2 of Acholeplasma laidlawii (strain PG-8A).